The sequence spans 302 residues: Nucleotide-binding protein STH186 (302 aa).

15-22 contacts ATP; the sequence is GMSGAGKT. A GTP-binding site is contributed by 66–69; sequence DIRG.

It belongs to the RapZ-like family.

Its function is as follows. Displays ATPase and GTPase activities. The sequence is that of Nucleotide-binding protein STH186 from Symbiobacterium thermophilum (strain DSM 24528 / JCM 14929 / IAM 14863 / T).